The sequence spans 195 residues: Protease (195 aa).

The Peptidase A2 domain maps to 71-149; the sequence is ALMLVDTGAE…DKWQILGRDV (79 aa). D76 is an active-site residue.

This Bos taurus (Bovine) protein is Protease.